Here is a 1404-residue protein sequence, read N- to C-terminus: DNA (cytosine-5)-methyltransferase 3 (1404 aa).

Over residues 1–10 (MKTKAGKQKK) the composition is skewed to basic residues. Positions 1 to 35 (MKTKAGKQKKRSVDSDDDVSRERRPKRATSGTNFK) are disordered. Positions 11–22 (RSVDSDDDVSRE) are enriched in basic and acidic residues. A Glycyl lysine isopeptide (Lys-Gly) (interchain with G-Cter in ubiquitin) cross-link involves residue lysine 486. BAH domains lie at 614-748 (RKMD…FSLP) and 788-929 (IKYS…KKLP). In terms of domain architecture, SAM-dependent MTase C5-type spans 969-1402 (LATLDIFAGC…RKLKEALHLR (434 aa)). Residue cysteine 1085 is part of the active site.

This sequence belongs to the class I-like SAM-binding methyltransferase superfamily. C5-methyltransferase family.

The protein resides in the nucleus. The enzyme catalyses a 2'-deoxycytidine in DNA + S-adenosyl-L-methionine = a 5-methyl-2'-deoxycytidine in DNA + S-adenosyl-L-homocysteine + H(+). Maintains chromatin CpG methylation that plays a role in genomic imprinting, regulation of embryogenesis and seed viability. Required for proper patterns of CG DNA methylation in dividing cells. Required during the endosperm development in seeds. The sequence is that of DNA (cytosine-5)-methyltransferase 3 (MET3) from Arabidopsis thaliana (Mouse-ear cress).